We begin with the raw amino-acid sequence, 334 residues long: Malate dehydrogenase, cytoplasmic (334 aa).

11–17 (GAAGQIA) contacts NAD(+). Substrate is bound by residues Arg92 and Arg98. NAD(+) contacts are provided by residues Asn105, Gln112, and 129 to 131 (VGN). The substrate site is built by Asn131 and Arg162. His187 acts as the Proton acceptor in catalysis.

Belongs to the LDH/MDH superfamily. MDH type 2 family. Homodimer.

It is found in the cytoplasm. The protein resides in the cytosol. The enzyme catalyses (S)-malate + NAD(+) = oxaloacetate + NADH + H(+). It catalyses the reaction (S)-2-hydroxyglutarate + NAD(+) = 2-oxoglutarate + NADH + H(+). Functionally, catalyzes the reduction of aromatic alpha-keto acids in the presence of NADH. Plays essential roles in the malate-aspartate shuttle and the tricarboxylic acid cycle, important in mitochondrial NADH supply for oxidative phosphorylation. Catalyzes the reduction of 2-oxoglutarate to 2-hydroxyglutarate, leading to elevated reactive oxygen species (ROS). The polypeptide is Malate dehydrogenase, cytoplasmic (MDH1) (Gallus gallus (Chicken)).